A 434-amino-acid polypeptide reads, in one-letter code: CBL-interacting protein kinase 15 (434 aa).

Residues 12-267 form the Protein kinase domain; sequence YELGRLLGKG…IQKIKESTWF (256 aa). ATP contacts are provided by residues 18 to 26 and K41; that span reads LGKGTFGKV. D135 serves as the catalytic Proton acceptor. Residues 153-182 are activation loop; that stretch reads DFGLSALSESKRQDGLLHTTCGTPAYVAPE. In terms of domain architecture, NAF spans 298–333; it reads RKKNAHEDVKPMSVTNLNAFEIISFSKGFDLSGMFI. The segment at 338 to 367 is PPI; that stretch reads RNEARFTSDKSASTIISKLEDVAKALNLRV.

The protein belongs to the protein kinase superfamily. CAMK Ser/Thr protein kinase family. SNF1 subfamily. Requires Mn(2+) as cofactor.

It catalyses the reaction L-seryl-[protein] + ATP = O-phospho-L-seryl-[protein] + ADP + H(+). It carries out the reaction L-threonyl-[protein] + ATP = O-phospho-L-threonyl-[protein] + ADP + H(+). Its function is as follows. Involved in salt stress tolerance. CIPK serine-threonine protein kinases interact with CBL proteins. Binding of a CBL protein to the regulatory NAF domain of CIPK protein lead to the activation of the kinase in a calcium-dependent manner. The chain is CBL-interacting protein kinase 15 (CIPK15) from Oryza sativa subsp. japonica (Rice).